Consider the following 134-residue polypeptide: Large ribosomal subunit protein eL32 (134 aa).

This sequence belongs to the eukaryotic ribosomal protein eL32 family.

The protein is Large ribosomal subunit protein eL32 (RpL32) of Drosophila bifasciata (Fruit fly).